Consider the following 334-residue polypeptide: Adenosine deaminase (334 aa).

Zn(2+) contacts are provided by His-16 and His-18. Positions 18, 20, and 173 each coordinate substrate. Residue His-200 participates in Zn(2+) binding. Glu-203 acts as the Proton donor in catalysis. Asp-281 is a Zn(2+) binding site.

The protein belongs to the metallo-dependent hydrolases superfamily. Adenosine and AMP deaminases family. Adenosine deaminase subfamily. Zn(2+) is required as a cofactor.

The enzyme catalyses adenosine + H2O + H(+) = inosine + NH4(+). The catalysed reaction is 2'-deoxyadenosine + H2O + H(+) = 2'-deoxyinosine + NH4(+). Its function is as follows. Catalyzes the hydrolytic deamination of adenosine and 2-deoxyadenosine. The protein is Adenosine deaminase of Clostridium acetobutylicum (strain ATCC 824 / DSM 792 / JCM 1419 / IAM 19013 / LMG 5710 / NBRC 13948 / NRRL B-527 / VKM B-1787 / 2291 / W).